The primary structure comprises 64 residues: Large ribosomal subunit protein bL35 (64 aa).

2 stretches are compositionally biased toward basic residues: residues 1 to 26 and 33 to 44; these read MPKM…KRSK and LTKKSPKRKRKL. The interval 1–44 is disordered; it reads MPKMKTHRGAAKRFKKTGTGKIKRSKAYTSHILTKKSPKRKRKL.

The protein belongs to the bacterial ribosomal protein bL35 family.

In Alkaliphilus oremlandii (strain OhILAs) (Clostridium oremlandii (strain OhILAs)), this protein is Large ribosomal subunit protein bL35.